A 336-amino-acid polypeptide reads, in one-letter code: Isopentenyl-diphosphate delta-isomerase (336 aa).

5 to 6 (RK) contacts substrate. FMN contacts are provided by residues 60-62 (AMT), Ser-90, and Asn-117. Gln-147 is a binding site for substrate. Mg(2+) is bound at residue Glu-148. FMN is bound by residues Lys-179, Ser-204, Thr-209, 253–255 (GVR), and 274–275 (SR).

The protein belongs to the IPP isomerase type 2 family. In terms of assembly, homooctamer. Dimer of tetramers. FMN serves as cofactor. It depends on NADPH as a cofactor. Requires Mg(2+) as cofactor.

The protein localises to the cytoplasm. It catalyses the reaction isopentenyl diphosphate = dimethylallyl diphosphate. Its function is as follows. Involved in the biosynthesis of isoprenoids. Catalyzes the 1,3-allylic rearrangement of the homoallylic substrate isopentenyl (IPP) to its allylic isomer, dimethylallyl diphosphate (DMAPP). This is Isopentenyl-diphosphate delta-isomerase from Streptococcus pneumoniae serotype 4 (strain ATCC BAA-334 / TIGR4).